The sequence spans 530 residues: Type 2 DNA topoisomerase 6 subunit B (530 aa).

ATP is bound by residues asparagine 42, aspartate 76, 97 to 98 (SK), 106 to 113 (GMYGLGVK), and lysine 427.

This sequence belongs to the TOP6B family. As to quaternary structure, homodimer. Heterotetramer of two Top6A and two Top6B chains.

The catalysed reaction is ATP-dependent breakage, passage and rejoining of double-stranded DNA.. Its function is as follows. Relaxes both positive and negative superturns and exhibits a strong decatenase activity. This is Type 2 DNA topoisomerase 6 subunit B from Saccharolobus islandicus (strain Y.N.15.51 / Yellowstone #2) (Sulfolobus islandicus).